A 421-amino-acid chain; its full sequence is NADH-dependent phenylglyoxylate dehydrogenase subunit epsilon (421 aa).

Residues 15 to 18, 39 to 40, and 279 to 297 each bind FAD; these read SSHA, TR, and ATAQARGFFTGTKVMNAIL.

This sequence belongs to the FAD-dependent oxidoreductase family. In terms of assembly, dimer of heteropentamers composed of an alpha (PadG), a beta (PadI), a gamma (PadE), a delta (PadF) and an epsilon (PadH) subunit. The cofactor is FAD.

It carries out the reaction phenylglyoxylate + NAD(+) + CoA = benzoyl-CoA + CO2 + NADH. With respect to regulation, activated by magnesium ions and thiamine diphosphate. In terms of biological role, involved in the anaerobic metabolism of phenylalanine and phenylacetate. Catalyzes the oxidative decarboxylation of phenylglyoxylate to benzoyl-CoA and CO(2). It can also react slowly with 2-oxo-3-methylbutanoate and use different electron acceptors such as benzyl viologen, methyl viologen, FAD or FMN, but NAD seems to be the physiological electron acceptor. Also catalyzes an isotope exchange between CO(2) and the carboxyl group which proves partial or complete reversibility of the oxidative decarboxylation reaction. The chain is NADH-dependent phenylglyoxylate dehydrogenase subunit epsilon (padH) from Aromatoleum evansii (Azoarcus evansii).